The sequence spans 502 residues: Glutamate dehydrogenase, mitochondrial (502 aa).

96–98 lines the NAD(+) pocket; that stretch reads HHR. K102 and K126 together coordinate substrate. D131 is a binding site for NAD(+). The active site involves K138. Position 394 (S394) interacts with substrate.

It belongs to the Glu/Leu/Phe/Val dehydrogenases family. As to quaternary structure, homohexamer.

Its subcellular location is the mitochondrion matrix. The catalysed reaction is L-glutamate + NAD(+) + H2O = 2-oxoglutarate + NH4(+) + NADH + H(+). It carries out the reaction L-glutamate + NADP(+) + H2O = 2-oxoglutarate + NH4(+) + NADPH + H(+). Its activity is regulated as follows. Subject to allosteric regulation. Activated by AMP and ADP. The protein is Glutamate dehydrogenase, mitochondrial (gluD) of Dictyostelium discoideum (Social amoeba).